The following is a 133-amino-acid chain: Cytochrome c-type biogenesis protein CcmE (133 aa).

Residues 1–7 (MKKKHKR) are Cytoplasmic-facing. The chain crosses the membrane as a helical; Signal-anchor for type II membrane protein span at residues 8-28 (LLITSGIFCFLSCIVFFILTT). Residues 29-133 (LKENISFFYT…YMPKVLKQIP (105 aa)) are Periplasmic-facing. 2 residues coordinate heme: H120 and Y124.

It belongs to the CcmE/CycJ family.

The protein localises to the cell inner membrane. In terms of biological role, heme chaperone required for the biogenesis of c-type cytochromes. Transiently binds heme delivered by CcmC and transfers the heme to apo-cytochromes in a process facilitated by CcmF and CcmH. In Wolbachia sp. subsp. Drosophila simulans (strain wRi), this protein is Cytochrome c-type biogenesis protein CcmE.